The chain runs to 95 residues: Aspartyl/glutamyl-tRNA(Asn/Gln) amidotransferase subunit C (95 aa).

This sequence belongs to the GatC family. Heterotrimer of A, B and C subunits.

It catalyses the reaction L-glutamyl-tRNA(Gln) + L-glutamine + ATP + H2O = L-glutaminyl-tRNA(Gln) + L-glutamate + ADP + phosphate + H(+). The catalysed reaction is L-aspartyl-tRNA(Asn) + L-glutamine + ATP + H2O = L-asparaginyl-tRNA(Asn) + L-glutamate + ADP + phosphate + 2 H(+). Allows the formation of correctly charged Asn-tRNA(Asn) or Gln-tRNA(Gln) through the transamidation of misacylated Asp-tRNA(Asn) or Glu-tRNA(Gln) in organisms which lack either or both of asparaginyl-tRNA or glutaminyl-tRNA synthetases. The reaction takes place in the presence of glutamine and ATP through an activated phospho-Asp-tRNA(Asn) or phospho-Glu-tRNA(Gln). The polypeptide is Aspartyl/glutamyl-tRNA(Asn/Gln) amidotransferase subunit C (Methylobacterium nodulans (strain LMG 21967 / CNCM I-2342 / ORS 2060)).